The following is a 100-amino-acid chain: Small ribosomal subunit protein uS14c (100 aa).

It belongs to the universal ribosomal protein uS14 family. Part of the 30S ribosomal subunit.

It localises to the plastid. Functionally, binds 16S rRNA, required for the assembly of 30S particles. The protein is Small ribosomal subunit protein uS14c of Cuscuta exaltata (Tall dodder).